Here is a 105-residue protein sequence, read N- to C-terminus: Iron-sulfur cluster assembly protein CyaY (105 aa).

The protein belongs to the frataxin family.

Functionally, involved in iron-sulfur (Fe-S) cluster assembly. May act as a regulator of Fe-S biogenesis. The sequence is that of Iron-sulfur cluster assembly protein CyaY from Paraburkholderia xenovorans (strain LB400).